Here is a 221-residue protein sequence, read N- to C-terminus: Probable endo-1,4-beta-xylanase B (221 aa).

The first 19 residues, 1–19 (MVSFSSLALALSTVVGVLA), serve as a signal peptide directing secretion. Residues 33 to 221 (QLTHSQTGTK…SSGSATMTVS (189 aa)) form the GH11 domain. Glu117 serves as the catalytic Nucleophile. The active-site Proton donor is Glu208.

This sequence belongs to the glycosyl hydrolase 11 (cellulase G) family.

Its subcellular location is the secreted. The enzyme catalyses Endohydrolysis of (1-&gt;4)-beta-D-xylosidic linkages in xylans.. The protein operates within glycan degradation; xylan degradation. In terms of biological role, endo-1,4-beta-xylanase involved in the hydrolysis of xylan, a major structural heterogeneous polysaccharide found in plant biomass representing the second most abundant polysaccharide in the biosphere, after cellulose. This is Probable endo-1,4-beta-xylanase B (xlnB) from Aspergillus clavatus (strain ATCC 1007 / CBS 513.65 / DSM 816 / NCTC 3887 / NRRL 1 / QM 1276 / 107).